Reading from the N-terminus, the 254-residue chain is MSYDRAITVFSPDGHLFQVEYAQEAVKKGSTAVGVRGRDIVVLGVEKKSVAKLQDERTVRKICALDDNVCMAFAVVASVSGLTADARIVINRARVECQSHRLTVGDPVTVEYITRYIASLKQRYTQSNGRRPFGISALIVGFDFDGTPRLYQTDPSGTYHAWKANAIGRGAKSVREFLEKNYTDDAIETDDLTIKLVIKALLEVVQSGGKNIELAVMRRDQPLKILSPEEIEKYVAEIEKEKEENEKKKQKKAS.

A glycan (O-linked (GlcNAc) serine) is linked at Ser-136. Residue Tyr-159 is modified to Phosphotyrosine. Lys-233 bears the N6-acetyllysine mark.

This sequence belongs to the peptidase T1A family. The 26S proteasome consists of a 20S proteasome core and two 19S regulatory subunits. The 20S proteasome core is a barrel-shaped complex made of 28 subunits that are arranged in four stacked rings. The two outer rings are each formed by seven alpha subunits, and the two inner rings are formed by seven beta subunits. The proteolytic activity is exerted by three beta-subunits PSMB5, PSMB6 and PSMB7. PSMA7 interacts directly with the PSMG1-PSMG2 heterodimer which promotes 20S proteasome assembly. Interacts with HIF1A. Interacts with RAB7A. Interacts with PRKN. Interacts with ABL1 and ABL2. Interacts with EMAP2. Interacts with MAVS. Ubiquitous.

Its subcellular location is the cytoplasm. The protein resides in the nucleus. In terms of biological role, component of the 20S core proteasome complex involved in the proteolytic degradation of most intracellular proteins. This complex plays numerous essential roles within the cell by associating with different regulatory particles. Associated with two 19S regulatory particles, forms the 26S proteasome and thus participates in the ATP-dependent degradation of ubiquitinated proteins. The 26S proteasome plays a key role in the maintenance of protein homeostasis by removing misfolded or damaged proteins that could impair cellular functions, and by removing proteins whose functions are no longer required. Associated with the PA200 or PA28, the 20S proteasome mediates ubiquitin-independent protein degradation. This type of proteolysis is required in several pathways including spermatogenesis (20S-PA200 complex) or generation of a subset of MHC class I-presented antigenic peptides (20S-PA28 complex). Inhibits the transactivation function of HIF-1A under both normoxic and hypoxia-mimicking conditions. The interaction with EMAP2 increases the proteasome-mediated HIF-1A degradation under the hypoxic conditions. Plays a role in hepatitis C virus internal ribosome entry site-mediated translation. Mediates nuclear translocation of the androgen receptor (AR) and thereby enhances androgen-mediated transactivation. Promotes MAVS degradation and thereby negatively regulates MAVS-mediated innate immune response. In Rattus norvegicus (Rat), this protein is Proteasome subunit alpha type-7 (Psma7).